The sequence spans 142 residues: Large ribosomal subunit protein uL13 (142 aa).

The protein belongs to the universal ribosomal protein uL13 family. Part of the 50S ribosomal subunit.

Functionally, this protein is one of the early assembly proteins of the 50S ribosomal subunit, although it is not seen to bind rRNA by itself. It is important during the early stages of 50S assembly. In Klebsiella pneumoniae (strain 342), this protein is Large ribosomal subunit protein uL13.